Reading from the N-terminus, the 220-residue chain is 1-Cys peroxiredoxin B (220 aa).

The region spanning 4–165 (LTLGDVVPDL…VLRATDALLT (162 aa)) is the Thioredoxin domain. Catalysis depends on cysteine 46, which acts as the Cysteine sulfenic acid (-SOH) intermediate. A Bipartite nuclear localization signal motif is present at residues 195-218 (KARFPAGFETAQLPSNKCYLRFTQ).

It belongs to the peroxiredoxin family. Prx6 subfamily.

It localises to the nucleus. The protein resides in the cytoplasm. It catalyses the reaction a hydroperoxide + [thioredoxin]-dithiol = an alcohol + [thioredoxin]-disulfide + H2O. Thiol-specific peroxidase that catalyzes the reduction of hydrogen peroxide and organic hydroperoxides to water and alcohols, respectively. Seems to contribute to the inhibition of germination during stress. This Oryza sativa subsp. japonica (Rice) protein is 1-Cys peroxiredoxin B.